We begin with the raw amino-acid sequence, 58 residues long: Large ribosomal subunit protein eL37 (58 aa).

Residues Cys20, Cys23, Cys35, and Cys38 each coordinate Zn(2+). The C4-type zinc-finger motif lies at 20–38 (CRRCGEKSYHTKKKVCSSC).

The protein belongs to the eukaryotic ribosomal protein eL37 family. The cofactor is Zn(2+).

Functionally, binds to the 23S rRNA. The chain is Large ribosomal subunit protein eL37 from Haloquadratum walsbyi (strain DSM 16790 / HBSQ001).